A 471-amino-acid polypeptide reads, in one-letter code: Metalloprotease TIKI homolog (471 aa).

Positions Met1–Ala24 are cleaved as a signal peptide. At Ser25–Pro449 the chain is on the extracellular side. N-linked (GlcNAc...) asparagine glycosylation is found at Asn226, Asn235, Asn284, and Asn342. A compositionally biased stretch (basic residues) spans Lys369 to Arg402. Residues Lys369–Ser406 are disordered. Residues Ile450–Phe470 form a helical membrane-spanning segment. A topological domain (cytoplasmic) is located at residue Arg471.

This sequence belongs to the TIKI family. It depends on Mn(2+) as a cofactor. The cofactor is Co(2+).

It is found in the membrane. Functionally, metalloprotease. The polypeptide is Metalloprotease TIKI homolog (Nematostella vectensis (Starlet sea anemone)).